Here is a 386-residue protein sequence, read N- to C-terminus: DNA-directed RNA polymerase subunit Rpo1C (386 aa).

This sequence belongs to the RNA polymerase beta' chain family. As to quaternary structure, part of the RNA polymerase complex.

Its subcellular location is the cytoplasm. It carries out the reaction RNA(n) + a ribonucleoside 5'-triphosphate = RNA(n+1) + diphosphate. Its function is as follows. DNA-dependent RNA polymerase (RNAP) catalyzes the transcription of DNA into RNA using the four ribonucleoside triphosphates as substrates. Forms part of the jaw domain. The sequence is that of DNA-directed RNA polymerase subunit Rpo1C from Methanococcus maripaludis (strain C6 / ATCC BAA-1332).